A 301-amino-acid chain; its full sequence is Probable alpha-L-glutamate ligase 2 (301 aa).

In terms of domain architecture, ATP-grasp spans 104 to 287 (LQLLSRKSIG…VADKIIQFIE (184 aa)). Residues Lys141, 178-179 (EY), Asp187, and 211-213 (RSN) each bind ATP. Mg(2+) is bound by residues Asp248, Glu260, and Asn262. Asp248, Glu260, and Asn262 together coordinate Mn(2+).

It belongs to the RimK family. Mg(2+) is required as a cofactor. It depends on Mn(2+) as a cofactor.

This Shewanella denitrificans (strain OS217 / ATCC BAA-1090 / DSM 15013) protein is Probable alpha-L-glutamate ligase 2.